Here is a 166-residue protein sequence, read N- to C-terminus: NADPH-dependent 7-cyano-7-deazaguanine reductase (166 aa).

The Thioimide intermediate role is filled by cysteine 57. The active-site Proton donor is aspartate 64. Substrate is bound by residues 79–81 (VES) and 98–99 (HE).

It belongs to the GTP cyclohydrolase I family. QueF type 1 subfamily.

It is found in the cytoplasm. It carries out the reaction 7-aminomethyl-7-carbaguanine + 2 NADP(+) = 7-cyano-7-deazaguanine + 2 NADPH + 3 H(+). The protein operates within tRNA modification; tRNA-queuosine biosynthesis. Its function is as follows. Catalyzes the NADPH-dependent reduction of 7-cyano-7-deazaguanine (preQ0) to 7-aminomethyl-7-deazaguanine (preQ1). This chain is NADPH-dependent 7-cyano-7-deazaguanine reductase, found in Staphylococcus haemolyticus (strain JCSC1435).